The primary structure comprises 412 residues: Gamma-glutamyl phosphate reductase (412 aa).

The protein belongs to the gamma-glutamyl phosphate reductase family.

It is found in the cytoplasm. The enzyme catalyses L-glutamate 5-semialdehyde + phosphate + NADP(+) = L-glutamyl 5-phosphate + NADPH + H(+). Its pathway is amino-acid biosynthesis; L-proline biosynthesis; L-glutamate 5-semialdehyde from L-glutamate: step 2/2. In terms of biological role, catalyzes the NADPH-dependent reduction of L-glutamate 5-phosphate into L-glutamate 5-semialdehyde and phosphate. The product spontaneously undergoes cyclization to form 1-pyrroline-5-carboxylate. This Bartonella quintana (strain Toulouse) (Rochalimaea quintana) protein is Gamma-glutamyl phosphate reductase.